A 177-amino-acid chain; its full sequence is Large ribosomal subunit protein uL6 (177 aa).

It belongs to the universal ribosomal protein uL6 family. In terms of assembly, part of the 50S ribosomal subunit.

In terms of biological role, this protein binds to the 23S rRNA, and is important in its secondary structure. It is located near the subunit interface in the base of the L7/L12 stalk, and near the tRNA binding site of the peptidyltransferase center. This is Large ribosomal subunit protein uL6 from Zymomonas mobilis subsp. mobilis (strain ATCC 31821 / ZM4 / CP4).